The chain runs to 664 residues: Prelamin-A/C (664 aa).

Met1 is subject to N-acetylmethionine. Positions 1–25 (METPSQRRATRSGAQASSTPLSPTR) are disordered. The segment at 1 to 33 (METPSQRRATRSGAQASSTPLSPTRITRLQEKE) is head. The segment at 1 to 130 (METPSQRRAT…TKKEGDLIAA (130 aa)) is interaction with MLIP. Thr3 carries the post-translational modification Phosphothreonine. Residue Ser5 is modified to Phosphoserine. Thr10 bears the Phosphothreonine mark. Phosphoserine occurs at positions 12 and 18. Thr19 is modified (phosphothreonine). Ser22 bears the Phosphoserine; by CDK1 mark. The IF rod domain maps to 31 to 387 (EKEDLQELND…KLLEGEEERL (357 aa)). Lys32 is subject to N6-acetyllysine; alternate. The residue at position 32 (Lys32) is an N6-succinyllysine; alternate. Residue Lys32 forms a Glycyl lysine isopeptide (Lys-Gly) (interchain with G-Cter in SUMO2); alternate linkage. The segment at 34-70 (DLQELNDRLAVYIDRVRSLETENAGLRLRITESEEVV) is coil 1A. Phosphoserine is present on residues Ser51, Ser66, and Ser71. The interval 71 to 80 (SREVSGIKAA) is linker 1. Lys78 and Lys97 each carry N6-acetyllysine. The segment at 81-218 (YEAELGDARK…NIYSEELRET (138 aa)) is coil 1B. A Glycyl lysine isopeptide (Lys-Gly) (interchain with G-Cter in SUMO2) cross-link involves residue Lys97. Ser107 carries the phosphoserine modification. Lys108, Lys114, Lys123, Lys135, Lys144, and Lys155 each carry N6-acetyllysine. Lys171 carries the N6-acetyllysine; alternate modification. Lys171 carries the post-translational modification N6-succinyllysine; alternate. Residue Lys171 forms a Glycyl lysine isopeptide (Lys-Gly) (interchain with G-Cter in SUMO2); alternate linkage. N6-acetyllysine is present on residues Lys180, Lys201, and Lys208. A Glycyl lysine isopeptide (Lys-Gly) (interchain with G-Cter in SUMO2); alternate cross-link involves residue Lys201. Lys201 is covalently cross-linked (Glycyl lysine isopeptide (Lys-Gly) (interchain with G-Cter in SUMO); alternate). Lys208 participates in a covalent cross-link: Glycyl lysine isopeptide (Lys-Gly) (interchain with G-Cter in SUMO2). Ser212 carries the post-translational modification Phosphoserine. Residues Lys219 and Lys233 each participate in a glycyl lysine isopeptide (Lys-Gly) (interchain with G-Cter in SUMO2) cross-link. The linker 2 stretch occupies residues 219 to 242 (KRRHETRLVEIDNGKQREFESRLA). Residues Lys233, Lys260, Lys265, and Lys270 each carry the N6-acetyllysine modification. The tract at residues 243–383 (DALQELRAQH…HAYRKLLEGE (141 aa)) is coil 2. The necessary and sufficient for the interaction with IFFO1 stretch occupies residues 259–331 (YKKELEKTYS…DLEDSLARER (73 aa)). A Glycyl lysine isopeptide (Lys-Gly) (interchain with G-Cter in SUMO2); alternate cross-link involves residue Lys260. Lys270 is covalently cross-linked (Glycyl lysine isopeptide (Lys-Gly) (interchain with G-Cter in SUMO2); alternate). A Phosphoserine modification is found at Ser277. Ser282 carries the post-translational modification Phosphoserine; by ATR. Residues Ser301 and Ser307 each carry the phosphoserine modification. Residue Lys311 forms a Glycyl lysine isopeptide (Lys-Gly) (interchain with G-Cter in SUMO2); alternate linkage. N6-acetyllysine occurs at positions 311, 316, and 341. Glycyl lysine isopeptide (Lys-Gly) (interchain with G-Cter in SUMO2) cross-links involve residues Lys366 and Lys378. The disordered stretch occupies residues 384–442 (EERLRLSPSPTSQRSRGRASSHSSQTQGGGSVTKKRKLESTESRSSFSQHARTSGRVAV). A tail region spans residues 384-664 (EERLRLSPSP…TQSPQNCSIM (281 aa)). Residue Ser390 is modified to Phosphoserine. Ser392 carries the phosphoserine; by CDK1 modification. Ser395 bears the Phosphoserine; by ATR mark. Ser398, Ser403, Ser404, Ser406, Ser407, and Ser414 each carry phosphoserine. Thr416 bears the Phosphothreonine mark. Lys417 carries the N6-acetyllysine modification. Residues Lys417 and Lys420 each participate in a glycyl lysine isopeptide (Lys-Gly) (interchain with G-Cter in SUMO2) cross-link. A Nuclear localization signal motif is present at residues 417 to 422 (KKRKLE). Residues Ser423, Ser426, Ser429, and Ser431 each carry the phosphoserine modification. Residues 426–435 (SRSSFSQHAR) are compositionally biased toward polar residues. Residues 428–545 (SSFSQHARTS…EEVAMRKLVR (118 aa)) form the LTD domain. Lys450 participates in a covalent cross-link: Glycyl lysine isopeptide (Lys-Gly) (interchain with G-Cter in SUMO2); alternate. N6-acetyllysine occurs at positions 450 and 457. Residues Ser458 and Ser463 each carry the phosphoserine modification. Glycyl lysine isopeptide (Lys-Gly) (interchain with G-Cter in SUMO2) cross-links involve residues Lys470 and Lys486. The residue at position 486 (Lys486) is an N6-acetyllysine. A phosphothreonine mark is found at Thr496, Thr505, and Thr510. Residues Ser533 and Ser546 each carry the phosphoserine modification. Thr548 is subject to Phosphothreonine. The interval 552-576 (DDEDEDGDDLLHHHHGSHCSSSGDP) is disordered. Ser568 and Ser571 each carry phosphoserine. Lys597 participates in a covalent cross-link: Glycyl lysine isopeptide (Lys-Gly) (interchain with G-Cter in SUMO2); alternate. Residue Lys597 forms a Glycyl lysine isopeptide (Lys-Gly) (interchain with G-Cter in SUMO1); alternate linkage. The disordered stretch occupies residues 598–619 (ASASGSGAQVGGPISSGSSASS). Phosphoserine is present on residues Ser612, Ser613, Ser616, and Ser619. Residues Ser625 and Ser628 are each glycosylated (O-linked (GlcNAc) serine). A phosphoserine mark is found at Ser628, Ser632, Ser636, and Ser652. Residues 647 to 661 (LLGNSSPRTQSPQNC) constitute a propeptide, removed in Lamin-A/C form. Residue Cys661 is modified to Cysteine methyl ester. Cys661 carries S-farnesyl cysteine lipidation. Positions 662–664 (SIM) are cleaved as a propeptide — removed in Prelamin-A/C form and in Lamin-A/C form.

This sequence belongs to the intermediate filament family. As to quaternary structure, homodimer of lamin A and lamin C. Lamin dimers then assemble into dimeric head-to-tail polymers. Ultimately, two head-to-tail polymers assemble laterally into a protofilament with a uniformly shaped rod of 3.5 nm in diameter. Interacts with lamin-associated polypeptides IA, IB and TMPO-alpha, RB1 and with emerin. Interacts with SREBF1, SREBF2, SUN2 and TMEM43. Interacts with TMEM201. Proteolytically processed isoform A interacts with NARF. Interacts with SUN1. Interacts with MLIP. Interacts with DMPK; may regulate nuclear envelope stability. Interacts with SUV39H1; the interaction increases stability of SUV39H1. Interacts with SYNE2. Interacts with ITSN1 isoform 2. Interacts with IFFO1; enables the formation of an interior nucleoskeleton that is recruited to DNA double-strand breaks. In terms of assembly, interacts with EMD. Interacts (via C-terminus) with LEMD2 (via N-terminus) (in vitro). Proteolytic cleavage of the C-terminal of 18 residues of prelamin-A/C results in the production of lamin-A/C. The prelamin-A/C maturation pathway includes farnesylation of CAAX motif by protein farnesyltransferase (FNTA and FNTB), removal of the last three amino acids (-AAX) by RCE1/FACE2 and/or ZMPSTE24, methylation of the C-terminal cysteine by ICMT and endoproteolytic removal of the last 15 C-terminal amino acids by ZMPSTE24. Proteolytic cleavage requires prior farnesylation and methylation, and absence of these blocks cleavage. Post-translationally, farnesylation of prelamin-A/C facilitates nuclear envelope targeting. In terms of processing, phosphorylation plays a key role in lamin organization, subcellular localization and nuclear envelope disintegration. Phosphorylation by CDK1 at Ser-22 and Ser-392 at the onset of mitosis drives lamin disassembly and nuclear envelope breakdown. Phosphorylation at Ser-22 and Ser-392 during interphase promotes localization to the nucleoplasm and regulates lamina assembly. Phosphorylation at Ser-22, Ser-392 and Ser-628 during interphase causes redistribution between the nucleus and the cytoplasm. Phosphorylation at Ser-22 by CDK1 regulates matrix stiffness. Phosphorylation status of Ser-22 determines its localization between double-strand break (DSB) sites and the nuclear matrix. Phosphorylated by ATR at Ser-282 in response to DNA damage, leading to lamin disassembly and nuclear envelope rupture. Phosphorylation also regulates stability in micronuclei arising from genome instability: phosphorylation at Ser-395 by ATR in response to genome instability and double-stranded DNA breaks primes LMNA for subsequent phosphorylation at Ser-392 by CDK1 and micronuclei envelope rupture. The rupture of micronuclear envelope triggers the cGAS-STING pathway thereby activating the type I interferon response and innate immunity. Acetylation by KAT8 is required for nuclear architecture. Post-translationally, sumoylation is necessary for the localization to the nuclear envelope. As to expression, in the arteries, prelamin-A/C accumulation is not observed in young healthy vessels but is prevalent in medial vascular smooth muscle cells (VSMCs) from aged individuals and in atherosclerotic lesions, where it often colocalizes with senescent and degenerate VSMCs. Prelamin-A/C expression increases with age and disease. In normal aging, the accumulation of prelamin-A/C is caused in part by the down-regulation of ZMPSTE24/FACE1 in response to oxidative stress.

The protein localises to the nucleus lamina. It localises to the nucleus envelope. The protein resides in the nucleus. Its subcellular location is the nucleoplasm. It is found in the nucleus matrix. The protein localises to the nucleus speckle. Functionally, lamins are intermediate filament proteins that assemble into a filamentous meshwork, and which constitute the major components of the nuclear lamina, a fibrous layer on the nucleoplasmic side of the inner nuclear membrane. Lamins provide a framework for the nuclear envelope, bridging the nuclear envelope and chromatin, thereby playing an important role in nuclear assembly, chromatin organization, nuclear membrane and telomere dynamics. Lamin A and C also regulate matrix stiffness by conferring nuclear mechanical properties. The structural integrity of the lamina is strictly controlled by the cell cycle, as seen by the disintegration and formation of the nuclear envelope in prophase and telophase, respectively. Lamin A and C are present in equal amounts in the lamina of mammals. Also invoved in DNA repair: recruited by DNA repair proteins XRCC4 and IFFO1 to the DNA double-strand breaks (DSBs) to prevent chromosome translocation by immobilizing broken DNA ends. Required for normal development of peripheral nervous system and skeletal muscle and for muscle satellite cell proliferation. Required for osteoblastogenesis and bone formation. Also prevents fat infiltration of muscle and bone marrow, helping to maintain the volume and strength of skeletal muscle and bone. Required for cardiac homeostasis. Prelamin-A/C can accelerate smooth muscle cell senescence. It acts to disrupt mitosis and induce DNA damage in vascular smooth muscle cells (VSMCs), leading to mitotic failure, genomic instability, and premature senescence. The sequence is that of Prelamin-A/C (LMNA) from Homo sapiens (Human).